We begin with the raw amino-acid sequence, 248 residues long: 2,3-bisphosphoglycerate-dependent phosphoglycerate mutase (248 aa).

Residues 8-15 (RHGESEWN), 21-22 (TG), arginine 60, 87-90 (ERHY), lysine 98, 114-115 (RR), and 183-184 (GN) each bind substrate. Histidine 9 (tele-phosphohistidine intermediate) is an active-site residue. The active-site Proton donor/acceptor is glutamate 87.

The protein belongs to the phosphoglycerate mutase family. BPG-dependent PGAM subfamily.

The enzyme catalyses (2R)-2-phosphoglycerate = (2R)-3-phosphoglycerate. It participates in carbohydrate degradation; glycolysis; pyruvate from D-glyceraldehyde 3-phosphate: step 3/5. Its function is as follows. Catalyzes the interconversion of 2-phosphoglycerate and 3-phosphoglycerate. The chain is 2,3-bisphosphoglycerate-dependent phosphoglycerate mutase from Borreliella afzelii (strain PKo) (Borrelia afzelii).